We begin with the raw amino-acid sequence, 434 residues long: MTVYHFVGIKGTGMSALAQVLYDLGYTVQGSDVEKWFFTQKALEERGIPVLPFSKDNVHPGYTVIAGNAFPDTHEEIEAARQLSVPVIRYHRFLGELASKFTSIAVTGSHGKTTTTGLLAHVMQGAHPTSYLIGDGTGKGEPGSKYFVFEACEYRRHFLSYFPDYAIITNIDFDHPDYFANIDDVFSAFQQMAQQVKKGIVACGDDPYLQNIQAKVPILFYGLGEENDFQARNIVKTTEGTAFDVFVRNTFFASFTIPRFGTHNVLNALAVIALCHYEGIDAGTIAARLQTFQGVKRRFTEKTVGRQVLIDDYAHHPREIMATLEAARQKYPGREVVAIFQPHTYTRTQTFLSEFAESLQQADYVYLCDIFGSAREHHGKLSIRDLQEKIPRSQLLEEQNVSVLKQHRDAVLVFMGAGDIQKFQHAYEQAVLSA.

108–114 contacts ATP; sequence GSHGKTT.

It belongs to the MurCDEF family.

It is found in the cytoplasm. The enzyme catalyses UDP-N-acetyl-alpha-D-muramate + L-alanine + ATP = UDP-N-acetyl-alpha-D-muramoyl-L-alanine + ADP + phosphate + H(+). Its pathway is cell wall biogenesis; peptidoglycan biosynthesis. Functionally, cell wall formation. The protein is UDP-N-acetylmuramate--L-alanine ligase of Geobacillus thermodenitrificans (strain NG80-2).